Here is a 271-residue protein sequence, read N- to C-terminus: MAVVTTKQLLESGVYFGHATRKWNPKMKPYIFTSRNGIHIINLKKTSEEIEKAYQELLNIITSGGKALFLGTKKQIQSAIREEAQRSQQYYVDHRWLGGTLTNFKTILKRIELLHLLHKQEEEGLWKKLPKKEVVQLKRKRDKLEKFLGGIKDMKDLPQAIFVVDPEKESIAVAEARKLGIKVFGIVDTNCDPDLVDYIIPANDDAIRGVKLIIWLMANACVEGTGGVAEKAETFDAKNPLKPQNYNAPNKRPYQDSPRKPSYQNQNQNQI.

The disordered stretch occupies residues 235-271; it reads FDAKNPLKPQNYNAPNKRPYQDSPRKPSYQNQNQNQI. Polar residues predominate over residues 262 to 271; the sequence is SYQNQNQNQI.

The protein belongs to the universal ribosomal protein uS2 family.

This Onion yellows phytoplasma (strain OY-M) protein is Small ribosomal subunit protein uS2.